A 309-amino-acid chain; its full sequence is NAD kinase (309 aa).

Catalysis depends on aspartate 89, which acts as the Proton acceptor. NAD(+) contacts are provided by residues 89–90 (DG), 163–164 (NE), histidine 174, arginine 191, aspartate 193, and 204–209 (TAYALS).

This sequence belongs to the NAD kinase family. It depends on a divalent metal cation as a cofactor.

It localises to the cytoplasm. It catalyses the reaction NAD(+) + ATP = ADP + NADP(+) + H(+). Its function is as follows. Involved in the regulation of the intracellular balance of NAD and NADP, and is a key enzyme in the biosynthesis of NADP. Catalyzes specifically the phosphorylation on 2'-hydroxyl of the adenosine moiety of NAD to yield NADP. In Shewanella sp. (strain ANA-3), this protein is NAD kinase.